A 112-amino-acid polypeptide reads, in one-letter code: Larval cuticle protein 3 (112 aa).

A signal peptide spans 1 to 16 (MFKILLVCSLAALVAA). The Chitin-binding type R&amp;R domain maps to 31–92 (PDGFVSKLVL…PQSDLLPTPP (62 aa)).

In terms of biological role, component of the larval cuticle. This chain is Larval cuticle protein 3 (Lcp3), found in Drosophila melanogaster (Fruit fly).